The chain runs to 263 residues: Isoprenyl transferase (263 aa).

D38 is an active-site residue. D38 contributes to the Mg(2+) binding site. Substrate contacts are provided by residues 39-42, H55, and 83-85; these read GNRR and STD. N86 serves as the catalytic Proton acceptor. Residues F87, R89, R212, and 218-220 each bind substrate; that span reads RLS. E231 lines the Mg(2+) pocket.

Belongs to the UPP synthase family. Homodimer. It depends on Mg(2+) as a cofactor.

Catalyzes the condensation of isopentenyl diphosphate (IPP) with allylic pyrophosphates generating different type of terpenoids. The protein is Isoprenyl transferase of Thermus thermophilus (strain ATCC 27634 / DSM 579 / HB8).